The sequence spans 1003 residues: Translation initiation factor IF-2 (1003 aa).

The tract at residues 36 to 392 (SSTIEPPVVK…RQKRNEYESM (357 aa)) is disordered. A compositionally biased stretch (low complexity) spans 62 to 151 (AAKPAAAKPA…PKPAAAAKPA (90 aa)). Pro residues-rich tracts occupy residues 178 to 190 (DGMP…PAPK) and 213 to 230 (PRPG…PGGG). Composition is skewed to gly residues over residues 231–243 (PRPQ…GGQR) and 255–271 (GNRG…GPRP). Positions 273–286 (GGPRPQGGSRPQGG) are enriched in low complexity. A compositionally biased stretch (gly residues) spans 329-372 (GKGGRGGQAGGGAGGGFNRGGGTGGGAGRGGRRGGTAGAFGRPG). The span at 376–385 (RRGRKSKRQK) shows a compositional bias: basic residues. The 173-residue stretch at 498-670 (KRPPVVTVMG…VCLTADAELD (173 aa)) folds into the tr-type G domain. The G1 stretch occupies residues 507-514 (GHVDHGKT). 507 to 514 (GHVDHGKT) contributes to the GTP binding site. Residues 532 to 536 (GITQG) are G2. Positions 557-560 (DTPG) are G3. GTP-binding positions include 557–561 (DTPGH) and 611–614 (NKID). Residues 611 to 614 (NKID) form a G4 region. The segment at 647–649 (SAK) is G5.

Belongs to the TRAFAC class translation factor GTPase superfamily. Classic translation factor GTPase family. IF-2 subfamily.

The protein localises to the cytoplasm. Functionally, one of the essential components for the initiation of protein synthesis. Protects formylmethionyl-tRNA from spontaneous hydrolysis and promotes its binding to the 30S ribosomal subunits. Also involved in the hydrolysis of GTP during the formation of the 70S ribosomal complex. The polypeptide is Translation initiation factor IF-2 (Corynebacterium glutamicum (strain R)).